The following is a 476-amino-acid chain: Siroheme synthase 1 (476 aa).

The segment at 1–203 is precorrin-2 dehydrogenase /sirohydrochlorin ferrochelatase; it reads MDYLPIFADL…GQTAEAQRQL (203 aa). NAD(+) contacts are provided by residues 22–23 and 43–44; these read EV and QS. Ser128 carries the post-translational modification Phosphoserine. The tract at residues 219–476 is uroporphyrinogen-III C-methyltransferase; sequence GEIALVGAGP…VSRPAVVNLA (258 aa). S-adenosyl-L-methionine is bound at residue Pro228. The active-site Proton acceptor is Asp251. Lys273 acts as the Proton donor in catalysis. S-adenosyl-L-methionine-binding positions include 304–306, Ile309, 334–335, Met386, and Gly415; these read GGD and TA.

It in the N-terminal section; belongs to the precorrin-2 dehydrogenase / sirohydrochlorin ferrochelatase family. This sequence in the C-terminal section; belongs to the precorrin methyltransferase family.

It catalyses the reaction uroporphyrinogen III + 2 S-adenosyl-L-methionine = precorrin-2 + 2 S-adenosyl-L-homocysteine + H(+). The catalysed reaction is precorrin-2 + NAD(+) = sirohydrochlorin + NADH + 2 H(+). The enzyme catalyses siroheme + 2 H(+) = sirohydrochlorin + Fe(2+). It participates in cofactor biosynthesis; adenosylcobalamin biosynthesis; precorrin-2 from uroporphyrinogen III: step 1/1. The protein operates within cofactor biosynthesis; adenosylcobalamin biosynthesis; sirohydrochlorin from precorrin-2: step 1/1. It functions in the pathway porphyrin-containing compound metabolism; siroheme biosynthesis; precorrin-2 from uroporphyrinogen III: step 1/1. Its pathway is porphyrin-containing compound metabolism; siroheme biosynthesis; siroheme from sirohydrochlorin: step 1/1. It participates in porphyrin-containing compound metabolism; siroheme biosynthesis; sirohydrochlorin from precorrin-2: step 1/1. Its function is as follows. Multifunctional enzyme that catalyzes the SAM-dependent methylations of uroporphyrinogen III at position C-2 and C-7 to form precorrin-2 via precorrin-1. Then it catalyzes the NAD-dependent ring dehydrogenation of precorrin-2 to yield sirohydrochlorin. Finally, it catalyzes the ferrochelation of sirohydrochlorin to yield siroheme. In Serratia proteamaculans (strain 568), this protein is Siroheme synthase 1.